A 293-amino-acid polypeptide reads, in one-letter code: Zinc finger protein 80 (293 aa).

2 consecutive C2H2-type zinc fingers follow at residues 69–91 and 97–119; these read YKCK…HQIH and YECQ…MRIH. A C2H2-type 3; atypical zinc finger spans residues 125-147; sequence CKCVECGKVFNRRSHLLCYHQIH. 4 consecutive C2H2-type zinc fingers follow at residues 153 to 175, 181 to 203, 209 to 231, and 237 to 259; these read YECS…RMTH, FGCK…MKIH, YKCG…SMTH, and YECK…TRSH.

The protein belongs to the krueppel C2H2-type zinc-finger protein family.

It is found in the nucleus. Its function is as follows. May be involved in transcriptional regulation. The chain is Zinc finger protein 80 (ZNF80) from Macaca mulatta (Rhesus macaque).